The following is a 380-amino-acid chain: Putative 8-amino-7-oxononanoate synthase (380 aa).

Residue R22 coordinates substrate. Residue 109-110 (GY) participates in pyridoxal 5'-phosphate binding. Residue H134 coordinates substrate. Pyridoxal 5'-phosphate contacts are provided by residues S182, 207–210 (DEAH), and 238–241 (TLSK). K241 is modified (N6-(pyridoxal phosphate)lysine). T353 is a binding site for substrate.

It belongs to the class-II pyridoxal-phosphate-dependent aminotransferase family. BioF subfamily. As to quaternary structure, homodimer. Pyridoxal 5'-phosphate is required as a cofactor.

It catalyses the reaction 6-carboxyhexanoyl-[ACP] + L-alanine + H(+) = (8S)-8-amino-7-oxononanoate + holo-[ACP] + CO2. It participates in cofactor biosynthesis; biotin biosynthesis. Its function is as follows. Catalyzes the decarboxylative condensation of pimeloyl-[acyl-carrier protein] and L-alanine to produce 8-amino-7-oxononanoate (AON), [acyl-carrier protein], and carbon dioxide. The protein is Putative 8-amino-7-oxononanoate synthase (bioF) of Gloeothece citriformis (strain PCC 7424) (Cyanothece sp. (strain PCC 7424)).